The primary structure comprises 405 residues: Caspase-1 (405 aa).

Positions Met1–Ser91 constitute a CARD domain. Residues Met1–Asp119 constitute a propeptide that is removed on maturation. Residues His238 and Cys286 contribute to the active site. Residues Ser299–Asp317 constitute a propeptide that is removed on maturation. The residue at position 303 (Ser303) is a Phosphoserine.

The protein belongs to the peptidase C14A family. Heterotetramer that consists of two anti-parallel arranged heterodimers, each one formed by a 20 kDa (Caspase-1 subunit p20) and a 10 kDa (Caspase-1 subunit p10) subunit. May be a component of the inflammasome, a protein complex which also includes PYCARD, CARD8 and NLRP2 and whose function would be the activation of pro-inflammatory caspases. Component of the AIM2 PANoptosome complex, a multiprotein complex that drives inflammatory cell death (PANoptosis). Both the p10 and p20 subunits interact with MEFV. Interacts with CARD17P/INCA and CARD18. Interacts with SERPINB1; this interaction regulates CASP1 activity. In terms of assembly, heterotetramer that consists of two anti-parallel arranged heterodimers, each one formed by a 20 kDa (Caspase-1 subunit p20) and a 10 kDa (Caspase-1 subunit p10) subunit. Post-translationally, the two subunits are derived from the precursor sequence by an autocatalytic mechanism. Ubiquitinated via 'Lys-11'-linked polyubiquitination. Deubiquitinated by USP8.

It is found in the cytoplasm. Its subcellular location is the cell membrane. It catalyses the reaction Strict requirement for an Asp residue at position P1 and has a preferred cleavage sequence of Tyr-Val-Ala-Asp-|-.. Thiol protease involved in a variety of inflammatory processes by proteolytically cleaving other proteins, such as the precursors of the inflammatory cytokines interleukin-1 beta (IL1B) and interleukin 18 (IL18) as well as the pyroptosis inducer Gasdermin-D (GSDMD), into active mature peptides. Plays a key role in cell immunity as an inflammatory response initiator: once activated through formation of an inflammasome complex, it initiates a pro-inflammatory response through the cleavage of the two inflammatory cytokines IL1B and IL18, releasing the mature cytokines which are involved in a variety of inflammatory processes. Cleaves a tetrapeptide after an Asp residue at position P1. Also initiates pyroptosis, a programmed lytic cell death pathway, through cleavage of GSDMD. In contrast to cleavage of interleukin IL1B, recognition and cleavage of GSDMD is not strictly dependent on the consensus cleavage site but depends on an exosite interface on CASP1 that recognizes and binds the Gasdermin-D, C-terminal (GSDMD-CT) part. Cleaves and activates CASP7 in response to bacterial infection, promoting plasma membrane repair. Upon inflammasome activation, during DNA virus infection but not RNA virus challenge, controls antiviral immunity through the cleavage of CGAS, rendering it inactive. In apoptotic cells, cleaves SPHK2 which is released from cells and remains enzymatically active extracellularly. The polypeptide is Caspase-1 (CASP1) (Equus caballus (Horse)).